The sequence spans 538 residues: Zinc finger protein 155 (538 aa).

A KRAB domain is found at 8–78; that stretch reads VTFKDVAVVF…GTATQREGNS (71 aa). 11 consecutive C2H2-type zinc fingers follow at residues 176 to 198, 204 to 226, 232 to 254, 260 to 282, 288 to 310, 316 to 338, 344 to 366, 372 to 394, 400 to 422, 428 to 450, and 456 to 478; these read YTCD…QRVH, FMCD…QRVH, FKCE…RKLH, YICE…KRIH, FKCD…SMVH, FRCD…CMVH, YRCE…QVVH, YNCK…QRVH, FKCE…QRSH, YKCE…QRVH, and YNCK…KRLH. The segment at 484 to 506 adopts a C2H2-type 12; degenerate zinc-finger fold; sequence FKCEDCGKRLVHRTYRKDQPRDY.

Belongs to the krueppel C2H2-type zinc-finger protein family.

The protein localises to the nucleus. May be involved in transcriptional regulation. In Homo sapiens (Human), this protein is Zinc finger protein 155 (ZNF155).